A 115-amino-acid chain; its full sequence is Skin calcitonin gene-related peptide (115 aa).

The N-terminal stretch at M1–A25 is a signal peptide. A propeptide spans A26 to R69 (removed in mature form by a carboxypeptidase). C71 and C76 are disulfide-bonded. Position 106 is a phenylalanine amide (F106). The propeptide at G107–V115 is removed in mature form by an endoprotease.

As to expression, skin, intestine and brain.

The protein localises to the secreted. Its function is as follows. CGRP induces vasodilation. It dilates a variety of vessels including the coronary, cerebral and systemic vasculature. Its abundance in the CNS also points toward a neurotransmitter or neuromodulator role. This chain is Skin calcitonin gene-related peptide, found in Phyllomedusa bicolor (Two-colored leaf frog).